The sequence spans 430 residues: Enolase (430 aa).

Glutamine 163 contacts (2R)-2-phosphoglycerate. The Proton donor role is filled by glutamate 205. Residues aspartate 242, glutamate 287, and aspartate 314 each coordinate Mg(2+). 4 residues coordinate (2R)-2-phosphoglycerate: lysine 339, arginine 368, serine 369, and lysine 390. The active-site Proton acceptor is lysine 339.

The protein belongs to the enolase family. The cofactor is Mg(2+).

Its subcellular location is the cytoplasm. The protein localises to the secreted. It is found in the cell surface. The enzyme catalyses (2R)-2-phosphoglycerate = phosphoenolpyruvate + H2O. Its pathway is carbohydrate degradation; glycolysis; pyruvate from D-glyceraldehyde 3-phosphate: step 4/5. Catalyzes the reversible conversion of 2-phosphoglycerate (2-PG) into phosphoenolpyruvate (PEP). It is essential for the degradation of carbohydrates via glycolysis. This Bacillus cytotoxicus (strain DSM 22905 / CIP 110041 / 391-98 / NVH 391-98) protein is Enolase.